The primary structure comprises 178 residues: Protein Vhl (178 aa).

Belongs to the VHL family. In terms of assembly, part of a complex with Cul2, Roc1a/Rbx1 and the elongin BC complex. Interacts with sima/Hif1a. Interacts with itself. Interacts with mgr and betaTub56D/tubulin beta-1 chain. Interacts with tubulin alpha-beta heterodimers by itself or in complex with mgr. Interacts with microtubules (MTs).

The protein operates within protein modification; protein ubiquitination. In terms of biological role, involved in development of tracheal vasculature. Probably involved in halting cell migration at the end of vascular tube outgrowth. Possesses E3 ubiquitin ligase activity when in complex with Elongin BC complex, Cul2 and Rox1a/Rbx1, and can target sima/Hif1a for ubiquitination. May play a critical role in promoting microtubule stabilization when tubulins are correctly folded by the prefoldin complex. If tubulin is incorrectly folded, may promote its degradation. The protein is Protein Vhl of Drosophila melanogaster (Fruit fly).